A 249-amino-acid chain; its full sequence is 2,3-bisphosphoglycerate-dependent phosphoglycerate mutase (249 aa).

Substrate is bound by residues 9-16, 22-23, arginine 61, 88-91, lysine 99, 115-116, and 184-185; these read RHGQSQWN, TG, ERHY, RR, and GN. Catalysis depends on histidine 10, which acts as the Tele-phosphohistidine intermediate. The Proton donor/acceptor role is filled by glutamate 88.

Belongs to the phosphoglycerate mutase family. BPG-dependent PGAM subfamily. In terms of assembly, homodimer.

It carries out the reaction (2R)-2-phosphoglycerate = (2R)-3-phosphoglycerate. It participates in carbohydrate degradation; glycolysis; pyruvate from D-glyceraldehyde 3-phosphate: step 3/5. Catalyzes the interconversion of 2-phosphoglycerate and 3-phosphoglycerate. The polypeptide is 2,3-bisphosphoglycerate-dependent phosphoglycerate mutase (Xylella fastidiosa (strain M23)).